A 629-amino-acid polypeptide reads, in one-letter code: Methyl-accepting chemotaxis protein PscA (629 aa).

Over 1-9 (MKNLGFSKK) the chain is Cytoplasmic. The helical transmembrane segment at 10–30 (ILLAAALIVVVAFSVFIVIND) threads the bilayer. Residues 31–276 (YRQRQSLKSS…AYAMLTEFRT (246 aa)) lie on the Periplasmic side of the membrane. Positions 36–258 (SLKSSVKSEL…QGVATANWYV (223 aa)) constitute a Cache domain. The helical transmembrane segment at 277 to 297 (SAITAMVVVVMVIILLLGPLI) threads the bilayer. Residues 298-352 (RVLMQPLHQMGRAMRDIADGEGDLTKRLAITSHDEFGALAESFNHFVERIHTSIR) form the HAMP domain. Residues 298-629 (RVLMQPLHQM…LQQLVGSFRI (332 aa)) lie on the Cytoplasmic side of the membrane. Positions 357 to 593 (TAAQLGEVAT…SINVDITHIN (237 aa)) constitute a Methyl-accepting transducer domain.

This sequence belongs to the methyl-accepting chemotaxis (MCP) protein family.

Its subcellular location is the cell inner membrane. Functionally, chemotactic-signal transducers respond to changes in the concentration of attractants and repellents in the environment, transduce a signal from the outside to the inside of the cell, and facilitate sensory adaptation through the variation of the level of methylation. PscA recognizes specifically and with high affinity L-Asp, D-Asp and L-Glu. It exerts a double function, in mediating chemotaxis to these amino acids and in modulating cyclic di-GMP (c-di-GMP) levels, causing alterations in biofilm development. Plays a key role in the infection process. It may facilitate bacterial entry into the plant. The sequence is that of Methyl-accepting chemotaxis protein PscA from Pseudomonas syringae pv. tomato (strain ATCC BAA-871 / DC3000).